The following is a 415-amino-acid chain: Heterogeneous nuclear ribonucleoprotein F (415 aa).

Met-1 is subject to N-acetylmethionine. An N-acetylmethionine; in Heterogeneous nuclear ribonucleoprotein F, N-terminally processed modification is found at Met-2. Residues 11 to 90 form the RRM 1 domain; that stretch reads YVVKLRGLPW…RYIEVFKSHR (80 aa). A Glycyl lysine isopeptide (Lys-Gly) (interchain with G-Cter in SUMO) cross-link involves residue Lys-72. Residues 81–86 form an interaction with RNA region; it reads RYIEVF. Lys-87 participates in a covalent cross-link: Glycyl lysine isopeptide (Lys-Gly) (interchain with G-Cter in SUMO2). Ser-104, Ser-107, and Ser-161 each carry phosphoserine. The RRM 2 domain occupies 111 to 188; the sequence is GFVRLRGLPF…RYIEVFKSSQ (78 aa). A Glycyl lysine isopeptide (Lys-Gly) (interchain with G-Cter in SUMO2) cross-link involves residue Lys-167. The interval 179 to 184 is interaction with RNA; sequence RYIEVF. Residue Lys-185 forms a Glycyl lysine isopeptide (Lys-Gly) (interchain with G-Cter in SUMO2) linkage. Residues Ser-187, Ser-193, and Ser-195 each carry the phosphoserine modification. Lys-200 bears the N6-acetyllysine; alternate mark. Lys-200 is covalently cross-linked (Glycyl lysine isopeptide (Lys-Gly) (interchain with G-Cter in SUMO2); alternate). A Phosphothreonine modification is found at Thr-215. Residue Lys-224 is modified to N6-acetyllysine; alternate. Lys-224 is covalently cross-linked (Glycyl lysine isopeptide (Lys-Gly) (interchain with G-Cter in SUMO2); alternate). Ser-265 is subject to Phosphoserine. Positions 289-366 constitute an RRM 3 domain; it reads HCVHMRGLPY…IELFLNSTTG (78 aa). The tract at residues 355 to 360 is interaction with RNA; sequence RYIELF.

As to quaternary structure, identified in the spliceosome C complex. Interacts with AGO1, AGO2, TBP and TXNL4/DIM1. Sumoylated.

Its subcellular location is the nucleus. The protein resides in the nucleoplasm. Functionally, component of the heterogeneous nuclear ribonucleoprotein (hnRNP) complexes which provide the substrate for the processing events that pre-mRNAs undergo before becoming functional, translatable mRNAs in the cytoplasm. Plays a role in the regulation of alternative splicing events. Binds G-rich sequences in pre-mRNAs and keeps target RNA in an unfolded state. This chain is Heterogeneous nuclear ribonucleoprotein F (Hnrnpf), found in Mus musculus (Mouse).